The following is a 1274-amino-acid chain: Symplekin (1274 aa).

The tract at residues 1 to 124 (MASGSGDSVT…NMLLRDENVN (124 aa)) is interaction with HSF1. Ser-13 carries the phosphoserine modification. HEAT repeat units lie at residues 31–64 (TTSE…LIIN), 67–101 (PTLL…EACK), 104–146 (IELL…WMVK), 153–192 (LQEA…GLIV), and 227–266 (VLWE…IARQ). A disordered region spans residues 335-392 (IARNMPSSKDTRKRPRDDSDSTLKKMKLEPNLGEDDEDKDLEPGPSGTSKASAQISGQ). The Nuclear localization signal signature appears at 345-360 (TRKRPRDDSDSTLKKM). Over residues 349–362 (PRDDSDSTLKKMKL) the composition is skewed to basic and acidic residues. Residue Lys-361 forms a Glycyl lysine isopeptide (Lys-Gly) (interchain with G-Cter in SUMO1); alternate linkage. Lys-361 participates in a covalent cross-link: Glycyl lysine isopeptide (Lys-Gly) (interchain with G-Cter in SUMO2); alternate. Polar residues predominate over residues 380–392 (SGTSKASAQISGQ). Lys-483 is covalently cross-linked (Glycyl lysine isopeptide (Lys-Gly) (interchain with G-Cter in SUMO2)). Ser-494 carries the post-translational modification Phosphoserine. Disordered regions lie at residues 1102–1137 (GKQE…PPQD) and 1149–1274 (LKRQ…KGNS). Basic and acidic residues predominate over residues 1149–1159 (LKRQLEEEQKL). Positions 1173–1185 (SPSPSARPGPPPS) are enriched in pro residues. Residues Ser-1221 and Ser-1222 each carry the phosphoserine modification. A Glycyl lysine isopeptide (Lys-Gly) (interchain with G-Cter in SUMO1) cross-link involves residue Lys-1239. Ser-1243 carries the phosphoserine modification. Thr-1257 is subject to Phosphothreonine. Ser-1259 bears the Phosphoserine mark. The span at 1263 to 1274 (EDAREPEAKGNS) shows a compositional bias: basic and acidic residues.

This sequence belongs to the Symplekin family. In terms of assembly, found in a heat-sensitive complex at least composed of several cleavage and polyadenylation specific and cleavage stimulation factors. Interacts with CPSF2, CPSF3 and CSTF2. Interacts (via N-terminus) with HSF1; this interaction is direct and occurs upon heat shock. Interacts with SSU72. In terms of tissue distribution, in testis, expressed in polar epithelia and Sertoli cells but not in vascular endothelia. The protein is detected in stomach, duodenum, pancreas, liver, fetal brain, carcinomas, lens-forming cells, fibroblasts, lymphocytes, lymphoma cells, erythroleukemia cells but not in endothelium of vessels, epidermis, intercalated disks, Purkinje fiber cells of the heart and lymph node.

It is found in the cytoplasm. The protein localises to the cytoskeleton. It localises to the cell junction. Its subcellular location is the tight junction. The protein resides in the cell membrane. It is found in the nucleus. The protein localises to the nucleoplasm. Scaffold protein that functions as a component of a multimolecular complex involved in histone mRNA 3'-end processing. Specific component of the tight junction (TJ) plaque, but might not be an exclusively junctional component. May have a house-keeping rule. Is involved in pre-mRNA polyadenylation. Enhances SSU72 phosphatase activity. The polypeptide is Symplekin (SYMPK) (Homo sapiens (Human)).